Consider the following 191-residue polypeptide: Peptidyl-tRNA hydrolase (191 aa).

Tyrosine 17 is a tRNA binding site. The active-site Proton acceptor is histidine 22. 3 residues coordinate tRNA: tyrosine 68, asparagine 70, and asparagine 116.

It belongs to the PTH family. Monomer.

The protein resides in the cytoplasm. The catalysed reaction is an N-acyl-L-alpha-aminoacyl-tRNA + H2O = an N-acyl-L-amino acid + a tRNA + H(+). In terms of biological role, hydrolyzes ribosome-free peptidyl-tRNAs (with 1 or more amino acids incorporated), which drop off the ribosome during protein synthesis, or as a result of ribosome stalling. Functionally, catalyzes the release of premature peptidyl moieties from peptidyl-tRNA molecules trapped in stalled 50S ribosomal subunits, and thus maintains levels of free tRNAs and 50S ribosomes. This chain is Peptidyl-tRNA hydrolase, found in Francisella tularensis subsp. tularensis (strain FSC 198).